The sequence spans 340 residues: Holliday junction branch migration complex subunit RuvB (340 aa).

Residues 1–182 (MSDIDPTVRA…FGIPTRLQFY (182 aa)) form a large ATPase domain (RuvB-L) region. Residues leucine 21, arginine 22, glycine 63, lysine 66, threonine 67, threonine 68, 129 to 131 (EDF), arginine 172, tyrosine 182, and arginine 219 contribute to the ATP site. Threonine 67 is a binding site for Mg(2+). Residues 183-253 (TEDELFIIVD…LADMALNRLG (71 aa)) are small ATPAse domain (RuvB-S). Residues 256–340 (HLGLDGADRR…PRAQTDLFEG (85 aa)) are head domain (RuvB-H). Positions 292, 311, and 316 each coordinate DNA.

It belongs to the RuvB family. In terms of assembly, homohexamer. Forms an RuvA(8)-RuvB(12)-Holliday junction (HJ) complex. HJ DNA is sandwiched between 2 RuvA tetramers; dsDNA enters through RuvA and exits via RuvB. An RuvB hexamer assembles on each DNA strand where it exits the tetramer. Each RuvB hexamer is contacted by two RuvA subunits (via domain III) on 2 adjacent RuvB subunits; this complex drives branch migration. In the full resolvosome a probable DNA-RuvA(4)-RuvB(12)-RuvC(2) complex forms which resolves the HJ.

The protein resides in the cytoplasm. The catalysed reaction is ATP + H2O = ADP + phosphate + H(+). In terms of biological role, the RuvA-RuvB-RuvC complex processes Holliday junction (HJ) DNA during genetic recombination and DNA repair, while the RuvA-RuvB complex plays an important role in the rescue of blocked DNA replication forks via replication fork reversal (RFR). RuvA specifically binds to HJ cruciform DNA, conferring on it an open structure. The RuvB hexamer acts as an ATP-dependent pump, pulling dsDNA into and through the RuvAB complex. RuvB forms 2 homohexamers on either side of HJ DNA bound by 1 or 2 RuvA tetramers; 4 subunits per hexamer contact DNA at a time. Coordinated motions by a converter formed by DNA-disengaged RuvB subunits stimulates ATP hydrolysis and nucleotide exchange. Immobilization of the converter enables RuvB to convert the ATP-contained energy into a lever motion, pulling 2 nucleotides of DNA out of the RuvA tetramer per ATP hydrolyzed, thus driving DNA branch migration. The RuvB motors rotate together with the DNA substrate, which together with the progressing nucleotide cycle form the mechanistic basis for DNA recombination by continuous HJ branch migration. Branch migration allows RuvC to scan DNA until it finds its consensus sequence, where it cleaves and resolves cruciform DNA. This chain is Holliday junction branch migration complex subunit RuvB, found in Roseobacter denitrificans (strain ATCC 33942 / OCh 114) (Erythrobacter sp. (strain OCh 114)).